Here is a 185-residue protein sequence, read N- to C-terminus: Elongation factor P (185 aa).

Belongs to the elongation factor P family.

Its subcellular location is the cytoplasm. Its pathway is protein biosynthesis; polypeptide chain elongation. In terms of biological role, involved in peptide bond synthesis. Stimulates efficient translation and peptide-bond synthesis on native or reconstituted 70S ribosomes in vitro. Probably functions indirectly by altering the affinity of the ribosome for aminoacyl-tRNA, thus increasing their reactivity as acceptors for peptidyl transferase. The protein is Elongation factor P of Geobacillus thermodenitrificans (strain NG80-2).